Here is a 344-residue protein sequence, read N- to C-terminus: 4-dimethylallyltryptophan N-methyltransferase easF (344 aa).

Belongs to the methyltransferase superfamily. As to quaternary structure, homodimer.

It catalyses the reaction 4-(3-methylbut-2-enyl)-L-tryptophan + S-adenosyl-L-methionine = 4-(3-methylbut-2-enyl)-L-abrine + S-adenosyl-L-homocysteine + H(+). It participates in alkaloid biosynthesis; ergot alkaloid biosynthesis. 4-dimethylallyltryptophan N-methyltransferase; part of the gene cluster that mediates the biosynthesis of fungal ergot alkaloid. DmaW catalyzes the first step of ergot alkaloid biosynthesis by condensing dimethylallyl diphosphate (DMAP) and tryptophan to form 4-dimethylallyl-L-tryptophan. The second step is catalyzed by the methyltransferase easF that methylates 4-dimethylallyl-L-tryptophan in the presence of S-adenosyl-L-methionine, resulting in the formation of 4-dimethylallyl-L-abrine. The catalase easC and the FAD-dependent oxidoreductase easE then transform 4-dimethylallyl-L-abrine to chanoclavine-I which is further oxidized by easD in the presence of NAD(+), resulting in the formation of chanoclavine-I aldehyde. Agroclavine dehydrogenase easG then mediates the conversion of chanoclavine-I aldehyde to agroclavine via a non-enzymatic adduct reaction: the substrate is an iminium intermediate that is formed spontaneously from chanoclavine-I aldehyde in the presence of glutathione. The presence of easA is not required to complete this reaction. Further conversion of agroclavine to paspalic acid is a two-step process involving oxidation of agroclavine to elymoclavine and of elymoclavine to paspalic acid, the second step being performed by the elymoclavine oxidase cloA. Paspalic acid is then further converted to D-lysergic acid. Ergopeptines are assembled from D-lysergic acid and three different amino acids by the D-lysergyl-peptide-synthetases composed each of a monomudular and a trimodular nonribosomal peptide synthetase subunit. LpsB and lpsC encode the monomodular subunits responsible for D-lysergic acid activation and incorporation into the ergopeptine backbone. LpsA1 and A2 subunits encode the trimodular nonribosomal peptide synthetase assembling the tripeptide portion of ergopeptines. LpsA1 is responsible for formation of the major ergopeptine, ergotamine, and lpsA2 for alpha-ergocryptine, the minor ergopeptine of the total alkaloid mixture elaborated by C.purpurea. D-lysergyl-tripeptides are assembled by the nonribosomal peptide synthetases and released as N-(D-lysergyl-aminoacyl)-lactams. Cyclolization of the D-lysergyl-tripeptides is performed by the Fe(2+)/2-ketoglutarate-dependent dioxygenase easH which introduces a hydroxyl group into N-(D-lysergyl-aminoacyl)-lactam at alpha-C of the aminoacyl residue followed by spontaneous condensation with the terminal lactam carbonyl group. In Claviceps purpurea (Ergot fungus), this protein is 4-dimethylallyltryptophan N-methyltransferase easF.